A 1110-amino-acid polypeptide reads, in one-letter code: Retinal guanylyl cyclase 1 (1110 aa).

Positions methionine 1 to serine 56 are cleaved as a signal peptide. Over alanine 57–glutamate 467 the chain is Extracellular. An N-linked (GlcNAc...) asparagine glycan is attached at asparagine 302. Residues proline 468–cysteine 492 form a helical membrane-spanning segment. The region spanning arginine 493–isoleucine 813 is the Protein kinase domain. Over arginine 493–lysine 1110 the chain is Cytoplasmic. The region spanning threonine 885 to glutamate 1015 is the Guanylate cyclase domain. The disordered stretch occupies residues proline 1070–lysine 1110. Over residues isoleucine 1091 to arginine 1103 the composition is skewed to basic and acidic residues.

It belongs to the adenylyl cyclase class-4/guanylyl cyclase family. Homodimer; requires homodimerization for guanylyl cyclase activity. Interacts (via C-terminus) with RD3 (via C-terminus); promotes the exit of GUCY2D from the endoplasmic reticulum and its trafficking to the photoreceptor outer segments. Interaction with RD3 negatively regulates GUCY2D guanylate cyclase activity. As to expression, expressed in the retina in rod outer segment.

It localises to the photoreceptor outer segment membrane. The protein localises to the endoplasmic reticulum membrane. It carries out the reaction GTP = 3',5'-cyclic GMP + diphosphate. With respect to regulation, activated by GUCA1A when free calcium ions concentration is low, and inhibited by GUCA1A when free calcium ions concentration is high. Negatively regulated by RD3; inhibits the basal and GUCA1A-stimulated guanylate cyclase activity. Its function is as follows. Catalyzes the synthesis of cyclic GMP (cGMP) in rods and cones of photoreceptors. Plays an essential role in phototransduction, by mediating cGMP replenishment. May also participate in the trafficking of membrane-asociated proteins to the photoreceptor outer segment membrane. This chain is Retinal guanylyl cyclase 1 (GUCY2D), found in Bos taurus (Bovine).